The following is a 105-amino-acid chain: UPF0235 protein CT1832 (105 aa).

The protein belongs to the UPF0235 family.

The protein is UPF0235 protein CT1832 of Chlorobaculum tepidum (strain ATCC 49652 / DSM 12025 / NBRC 103806 / TLS) (Chlorobium tepidum).